Reading from the N-terminus, the 389-residue chain is Phenylpropanoylacetyl-CoA synthase (389 aa).

Cys-163 is an active-site residue.

The protein belongs to the thiolase-like superfamily. Chalcone/stilbene synthases family. As to quaternary structure, homodimer. Expressed in both the leaf and rhizome, with higher expression in the rhizome.

The catalysed reaction is (E)-feruloyl-CoA + malonyl-CoA + H(+) = (E)-feruloylacetyl-CoA + CO2 + CoA. It carries out the reaction 4-coumaroyl-CoA + malonyl-CoA + H(+) = (4-coumaroyl)acetyl-CoA + CO2 + CoA. It participates in secondary metabolite biosynthesis; flavonoid biosynthesis. Its function is as follows. Catalyzes the formation of feruloyldiketide-CoA by condensing feruloyl-CoA and malonyl-CoA in the curcuminoid biosynthesis. Has no activity with cinnamoyl-CoA. The sequence is that of Phenylpropanoylacetyl-CoA synthase (DCS) from Curcuma longa (Turmeric).